The primary structure comprises 313 residues: Methionyl-tRNA formyltransferase (313 aa).

Residue 109-112 coordinates (6S)-5,6,7,8-tetrahydrofolate; that stretch reads SLLP.

Belongs to the Fmt family.

The catalysed reaction is L-methionyl-tRNA(fMet) + (6R)-10-formyltetrahydrofolate = N-formyl-L-methionyl-tRNA(fMet) + (6S)-5,6,7,8-tetrahydrofolate + H(+). In terms of biological role, attaches a formyl group to the free amino group of methionyl-tRNA(fMet). The formyl group appears to play a dual role in the initiator identity of N-formylmethionyl-tRNA by promoting its recognition by IF2 and preventing the misappropriation of this tRNA by the elongation apparatus. This is Methionyl-tRNA formyltransferase from Thermotoga maritima (strain ATCC 43589 / DSM 3109 / JCM 10099 / NBRC 100826 / MSB8).